A 493-amino-acid chain; its full sequence is Transmembrane protein 184 homolog DDB_G0284525 (493 aa).

Over residues 1 to 10 (MTQESSSSNH) the composition is skewed to polar residues. The disordered stretch occupies residues 1 to 25 (MTQESSSSNHYVDESSFDNNNNNNN). The next 7 helical transmembrane spans lie at 46 to 66 (VPALYAMFALASLFVLLATIL), 87 to 107 (IVRIVFMIPIYAIYSLLSLLL), 119 to 139 (DCYEAYVLYMFFALCVSYGGG), 180 to 200 (YVLVRPAVTLASAIFEIFGLY), 212 to 232 (FYNAFIINVSVTVALYIVVLF), 254 to 274 (IVVFFCFWQSIAISGMTNFGW), and 293 to 313 (FLICFEMFGVAILHQYAFPYE). N-linked (GlcNAc...) asparagine glycans are attached at residues asparagine 415 and asparagine 416.

This sequence belongs to the TMEM184 family.

The protein resides in the cell membrane. Functionally, probable transporter. The protein is Transmembrane protein 184 homolog DDB_G0284525 (tmem184A) of Dictyostelium discoideum (Social amoeba).